Consider the following 453-residue polypeptide: Homogentisate 1,2-dioxygenase (453 aa).

Catalysis depends on H306, which acts as the Proton acceptor. Fe cation-binding residues include H349 and E355. Homogentisate is bound by residues Y364 and H385. H385 provides a ligand contact to Fe cation.

This sequence belongs to the homogentisate dioxygenase family. As to quaternary structure, hexamer; dimer of trimers. Fe cation serves as cofactor.

It carries out the reaction homogentisate + O2 = 4-maleylacetoacetate + H(+). Its pathway is amino-acid degradation; L-phenylalanine degradation; acetoacetate and fumarate from L-phenylalanine: step 4/6. In terms of biological role, involved in the catabolism of homogentisate (2,5-dihydroxyphenylacetate or 2,5-OH-PhAc), a central intermediate in the degradation of phenylalanine and tyrosine. Catalyzes the oxidative ring cleavage of the aromatic ring of homogentisate to yield maleylacetoacetate. This is Homogentisate 1,2-dioxygenase from Rhizobium rhizogenes (strain K84 / ATCC BAA-868) (Agrobacterium radiobacter).